A 216-amino-acid chain; its full sequence is Holliday junction branch migration complex subunit RuvA (216 aa).

Residues 1–64 (MISFIKGVLI…EDAQQLYGFK (64 aa)) form a domain I region. The interval 65 to 143 (SKVDKKVFQE…KMANEIYAQT (79 aa)) is domain II. The interval 144 to 163 (SGTTTTSQDSQAQQAPTSAV) is flexible linker. The tract at residues 164-216 (LANSIFNESVDALLALGYKQKDAEKMSRSAMGDATTAAEVIRKALQGSIRSKR) is domain III.

Belongs to the RuvA family. As to quaternary structure, homotetramer. Forms an RuvA(8)-RuvB(12)-Holliday junction (HJ) complex. HJ DNA is sandwiched between 2 RuvA tetramers; dsDNA enters through RuvA and exits via RuvB. An RuvB hexamer assembles on each DNA strand where it exits the tetramer. Each RuvB hexamer is contacted by two RuvA subunits (via domain III) on 2 adjacent RuvB subunits; this complex drives branch migration. In the full resolvosome a probable DNA-RuvA(4)-RuvB(12)-RuvC(2) complex forms which resolves the HJ.

It is found in the cytoplasm. Its function is as follows. The RuvA-RuvB-RuvC complex processes Holliday junction (HJ) DNA during genetic recombination and DNA repair, while the RuvA-RuvB complex plays an important role in the rescue of blocked DNA replication forks via replication fork reversal (RFR). RuvA specifically binds to HJ cruciform DNA, conferring on it an open structure. The RuvB hexamer acts as an ATP-dependent pump, pulling dsDNA into and through the RuvAB complex. HJ branch migration allows RuvC to scan DNA until it finds its consensus sequence, where it cleaves and resolves the cruciform DNA. In Francisella tularensis subsp. novicida (strain U112), this protein is Holliday junction branch migration complex subunit RuvA.